A 168-amino-acid chain; its full sequence is CASP-like protein 4D1 (168 aa).

The Cytoplasmic segment spans residues 1–11 (MAPPPPSLASR). A helical transmembrane segment spans residues 12–32 (MAALILRILTFIFLIASLVIL). Over 33–57 (TTNTATLELDLVEVKVHFKDVYAYR) the chain is Extracellular. Residues 58 to 78 (YMLATIVIGLAYTVLQIAFTL) traverse the membrane as a helical segment. At 79–97 (YYVATGNRMMSGDGNLAFD) the chain is on the cytoplasmic side. Residues 98 to 118 (FFGDKVISYILVTGAAAGFAS) traverse the membrane as a helical segment. The Extracellular portion of the chain corresponds to 119 to 144 (TKDIKPVFSGSGDFDAFINKGYASAS). The chain crosses the membrane as a helical span at residues 145 to 165 (LLLIGFVCTAVLSVFSSYALP). Over 166 to 168 (KQV) the chain is Cytoplasmic.

Belongs to the Casparian strip membrane proteins (CASP) family. In terms of assembly, homodimer and heterodimers.

Its subcellular location is the cell membrane. This Ricinus communis (Castor bean) protein is CASP-like protein 4D1.